Here is a 119-residue protein sequence, read N- to C-terminus: Large ribosomal subunit protein uL18 (119 aa).

It belongs to the universal ribosomal protein uL18 family. Part of the 50S ribosomal subunit; part of the 5S rRNA/L5/L18/L25 subcomplex. Contacts the 5S and 23S rRNAs.

In terms of biological role, this is one of the proteins that bind and probably mediate the attachment of the 5S RNA into the large ribosomal subunit, where it forms part of the central protuberance. The sequence is that of Large ribosomal subunit protein uL18 from Cupriavidus taiwanensis (strain DSM 17343 / BCRC 17206 / CCUG 44338 / CIP 107171 / LMG 19424 / R1) (Ralstonia taiwanensis (strain LMG 19424)).